The sequence spans 557 residues: Glypican-4 (557 aa).

A signal peptide spans 1–18 (MARLGLLALLCTLAALSA). Ser-357 is subject to Phosphoserine. Ser-494, Ser-498, and Ser-500 each carry an O-linked (Xyl...) (glycosaminoglycan) serine glycan. An N-linked (GlcNAc...) asparagine glycan is attached at Asn-514. Ser-529 carries GPI-anchor amidated serine lipidation. A propeptide spans 530–557 (AGGAHAEAKPYLLAALCILFLAVQGEWR) (removed in mature form).

The protein belongs to the glypican family. Highly expressed in developing brain and kidney.

It is found in the cell membrane. It localises to the secreted. The protein resides in the extracellular space. Its function is as follows. Cell surface proteoglycan that bears heparan sulfate. May be involved in the development of kidney tubules and of the central nervous system. The chain is Glypican-4 (Gpc4) from Mus musculus (Mouse).